The sequence spans 129 residues: MALEYPSHLRYVDTHEYIHVEDDIAVIGITAYAVDQLGDIVFVGLPEEGTEIEKGESFGSVESVKAVEDLYAPLSGEVVAVNTAVVESPESLADDPYGDGWLIKVRIANPEDLEDTMSAEAYASLVEGS.

The Lipoyl-binding domain maps to 24–106 (IAVIGITAYA…YGDGWLIKVR (83 aa)). Position 65 is an N6-lipoyllysine (K65).

This sequence belongs to the GcvH family. The glycine cleavage system is composed of four proteins: P, T, L and H. It depends on (R)-lipoate as a cofactor.

The glycine cleavage system catalyzes the degradation of glycine. The H protein shuttles the methylamine group of glycine from the P protein to the T protein. This chain is Glycine cleavage system H protein, found in Synechococcus sp. (strain JA-2-3B'a(2-13)) (Cyanobacteria bacterium Yellowstone B-Prime).